The primary structure comprises 132 residues: Small ribosomal subunit protein uS8 (132 aa).

Belongs to the universal ribosomal protein uS8 family. Part of the 30S ribosomal subunit. Contacts proteins S5 and S12.

Functionally, one of the primary rRNA binding proteins, it binds directly to 16S rRNA central domain where it helps coordinate assembly of the platform of the 30S subunit. The chain is Small ribosomal subunit protein uS8 from Leifsonia xyli subsp. xyli (strain CTCB07).